The following is a 415-amino-acid chain: Serine/threonine transporter SstT (415 aa).

The next 8 membrane-spanning stretches (helical) occupy residues 15 to 35 (GSLV…AWLA), 45 to 65 (LGTL…WILV), 85 to 105 (ILYI…SFIF), 142 to 162 (ALLN…GIAL), 193 to 213 (VGIF…ALLG), 217 to 237 (LLVV…PLIV), 301 to 321 (GAAV…GIPV), and 331 to 351 (VVSA…LLLI).

It belongs to the dicarboxylate/amino acid:cation symporter (DAACS) (TC 2.A.23) family.

The protein resides in the cell inner membrane. The enzyme catalyses L-serine(in) + Na(+)(in) = L-serine(out) + Na(+)(out). It carries out the reaction L-threonine(in) + Na(+)(in) = L-threonine(out) + Na(+)(out). Involved in the import of serine and threonine into the cell, with the concomitant import of sodium (symport system). This is Serine/threonine transporter SstT from Photorhabdus laumondii subsp. laumondii (strain DSM 15139 / CIP 105565 / TT01) (Photorhabdus luminescens subsp. laumondii).